The chain runs to 208 residues: Somatotropin-B (208 aa).

The N-terminal stretch at 1 to 25 (MVPGSCSSFGLLVILSFQNVPDVGG) is a signal peptide. Zn(2+) is bound at residue His44. Cysteines 77 and 181 form a disulfide. Glu190 is a binding site for Zn(2+). Cys198 and Cys206 are disulfide-bonded.

The protein belongs to the somatotropin/prolactin family.

It localises to the secreted. Growth hormone plays an important role in growth control. This Xenopus laevis (African clawed frog) protein is Somatotropin-B (gh-b).